The primary structure comprises 170 residues: Large ribosomal subunit protein uL10 (170 aa).

This sequence belongs to the universal ribosomal protein uL10 family. In terms of assembly, part of the ribosomal stalk of the 50S ribosomal subunit. The N-terminus interacts with L11 and the large rRNA to form the base of the stalk. The C-terminus forms an elongated spine to which L12 dimers bind in a sequential fashion forming a multimeric L10(L12)X complex.

Functionally, forms part of the ribosomal stalk, playing a central role in the interaction of the ribosome with GTP-bound translation factors. The protein is Large ribosomal subunit protein uL10 of Fusobacterium nucleatum subsp. nucleatum (strain ATCC 25586 / DSM 15643 / BCRC 10681 / CIP 101130 / JCM 8532 / KCTC 2640 / LMG 13131 / VPI 4355).